Consider the following 316-residue polypeptide: Ribosomal RNA small subunit methyltransferase H (316 aa).

Residues 35–37 (AGH), D55, F84, D105, and Q112 each bind S-adenosyl-L-methionine.

The protein belongs to the methyltransferase superfamily. RsmH family.

Its subcellular location is the cytoplasm. It catalyses the reaction cytidine(1402) in 16S rRNA + S-adenosyl-L-methionine = N(4)-methylcytidine(1402) in 16S rRNA + S-adenosyl-L-homocysteine + H(+). In terms of biological role, specifically methylates the N4 position of cytidine in position 1402 (C1402) of 16S rRNA. This chain is Ribosomal RNA small subunit methyltransferase H, found in Streptococcus pneumoniae (strain Taiwan19F-14).